Reading from the N-terminus, the 322-residue chain is Probable arabinan endo-1,5-alpha-L-arabinosidase A (322 aa).

The signal sequence occupies residues 1–19 (MYLPTLAASASLLVGVAHG). Catalysis depends on aspartate 34, which acts as the Proton acceptor. Glutamate 201 acts as the Proton donor in catalysis.

Belongs to the glycosyl hydrolase 43 family.

The protein localises to the secreted. The catalysed reaction is Endohydrolysis of (1-&gt;5)-alpha-arabinofuranosidic linkages in (1-&gt;5)-arabinans.. It functions in the pathway glycan metabolism; L-arabinan degradation. Functionally, endo-1,5-alpha-L-arabinanase involved in degradation of pectin. Its preferred substrate is linear 1,5-alpha-L-arabinan. The chain is Probable arabinan endo-1,5-alpha-L-arabinosidase A (abnA) from Emericella nidulans (strain FGSC A4 / ATCC 38163 / CBS 112.46 / NRRL 194 / M139) (Aspergillus nidulans).